The sequence spans 286 residues: 5-amino-6-(5-phospho-D-ribitylamino)uracil phosphatase YwtE (286 aa).

Asp-7 acts as the Nucleophile in catalysis. Asp-7 is a Mg(2+) binding site. Residue Leu-8 coordinates phosphate. Asp-9 contributes to the Mg(2+) binding site. Phosphate-binding positions include 41-42 (TG) and Lys-210. Residues Asp-233 and Ser-234 each coordinate Mg(2+). A phosphate-binding site is contributed by Asn-236.

Belongs to the HAD-like hydrolase superfamily. Cof family. It depends on Mg(2+) as a cofactor.

The enzyme catalyses 5-amino-6-(5-phospho-D-ribitylamino)uracil + H2O = 5-amino-6-(D-ribitylamino)uracil + phosphate. It functions in the pathway cofactor biosynthesis; riboflavin biosynthesis; 5-amino-6-(D-ribitylamino)uracil from GTP: step 4/4. Functionally, catalyzes the dephosphorylation of the riboflavin precursor 5-amino-6-(5-phospho-D-ribitylamino)uracil and of flavin mononucleotide (FMN) in vitro. Also catalyzes the dephosphorylation of phosphorylated 5-6 carbon sugars and monophosphate nucleotides (NMP) in vitro. The polypeptide is 5-amino-6-(5-phospho-D-ribitylamino)uracil phosphatase YwtE (ywtE) (Bacillus subtilis (strain 168)).